The chain runs to 275 residues: MAEEHKHDESVIAPEPAVEVVERESLMDKISEKIHHGGDSSSSSSSSDDEDEKKKTKKPSSPSSSMKSKVYRLFGREQPVHKVLGGGKPADIFMWKNKKMSGGVLGGATAAWVVFELMEYHLLTLLCHVMIVVLAVLFLWSNATMFINKSPPKIPEVHIPEEPILQLASGLRIEINRGFSSLREIASGRDLKKFLIAIAGLWVLSILGGCFNFLTLAYIALVLLFTVPLAYDKYEDKVDPLGEKAMIELKKQYAVLDEKVLSKIPLGPLKNKKKD.

Basic and acidic residues-rich tracts occupy residues Met1–Ser10 and Val20–Gly38. Residues Met1 to Ser68 form a disordered region. Ala2 is subject to N-acetylalanine. Positions Pro59–Ser68 are enriched in low complexity. The 186-residue stretch at Pro89–Lys274 folds into the Reticulon domain. 3 consecutive transmembrane segments (helical) span residues Lys99 to Glu119, Tyr120 to Trp140, and Phe194 to Leu214.

In terms of assembly, interacts with VirB2. Predominantly expressed in root tissues.

The protein localises to the endoplasmic reticulum membrane. It is found in the cell membrane. Its function is as follows. Plays a role in the Agrobacterium-mediated plant transformation via its interaction with VirB2, the major component of the T-pilus. In Arabidopsis thaliana (Mouse-ear cress), this protein is Reticulon-like protein B1 (RTNLB1).